The following is a 348-amino-acid chain: Dihydroorotase (348 aa).

Zn(2+) is bound by residues H14 and H16. Substrate is bound by residues 16–18 (HLR) and N42. 3 residues coordinate Zn(2+): K100, H137, and H175. At K100 the chain carries N6-carboxylysine. Position 137 (H137) interacts with substrate. Residue L220 participates in substrate binding. D248 provides a ligand contact to Zn(2+). D248 is an active-site residue. Substrate is bound by residues H252 and A264.

This sequence belongs to the metallo-dependent hydrolases superfamily. DHOase family. Class II DHOase subfamily. Homodimer. The cofactor is Zn(2+).

The catalysed reaction is (S)-dihydroorotate + H2O = N-carbamoyl-L-aspartate + H(+). The protein operates within pyrimidine metabolism; UMP biosynthesis via de novo pathway; (S)-dihydroorotate from bicarbonate: step 3/3. Catalyzes the reversible cyclization of carbamoyl aspartate to dihydroorotate. This Synechococcus sp. (strain CC9605) protein is Dihydroorotase.